The chain runs to 735 residues: Phosphoribosylformylglycinamidine synthase subunit PurL (735 aa).

Histidine 49 is a catalytic residue. ATP contacts are provided by tyrosine 52 and lysine 91. Glutamate 93 contacts Mg(2+). Substrate contacts are provided by residues 94–97 (SHNH) and arginine 116. The Proton acceptor role is filled by histidine 95. Aspartate 117 contributes to the Mg(2+) binding site. Glutamine 240 provides a ligand contact to substrate. Aspartate 268 lines the Mg(2+) pocket. Residue 312-314 (ESQ) coordinates substrate. ATP-binding residues include aspartate 493 and glycine 530. A Mg(2+)-binding site is contributed by asparagine 531. A substrate-binding site is contributed by serine 533.

It belongs to the FGAMS family. In terms of assembly, monomer. Part of the FGAM synthase complex composed of 1 PurL, 1 PurQ and 2 PurS subunits.

The protein resides in the cytoplasm. The enzyme catalyses N(2)-formyl-N(1)-(5-phospho-beta-D-ribosyl)glycinamide + L-glutamine + ATP + H2O = 2-formamido-N(1)-(5-O-phospho-beta-D-ribosyl)acetamidine + L-glutamate + ADP + phosphate + H(+). It functions in the pathway purine metabolism; IMP biosynthesis via de novo pathway; 5-amino-1-(5-phospho-D-ribosyl)imidazole from N(2)-formyl-N(1)-(5-phospho-D-ribosyl)glycinamide: step 1/2. Part of the phosphoribosylformylglycinamidine synthase complex involved in the purines biosynthetic pathway. Catalyzes the ATP-dependent conversion of formylglycinamide ribonucleotide (FGAR) and glutamine to yield formylglycinamidine ribonucleotide (FGAM) and glutamate. The FGAM synthase complex is composed of three subunits. PurQ produces an ammonia molecule by converting glutamine to glutamate. PurL transfers the ammonia molecule to FGAR to form FGAM in an ATP-dependent manner. PurS interacts with PurQ and PurL and is thought to assist in the transfer of the ammonia molecule from PurQ to PurL. In Azorhizobium caulinodans (strain ATCC 43989 / DSM 5975 / JCM 20966 / LMG 6465 / NBRC 14845 / NCIMB 13405 / ORS 571), this protein is Phosphoribosylformylglycinamidine synthase subunit PurL.